A 253-amino-acid polypeptide reads, in one-letter code: uncharacterized protein (253 aa).

Helical transmembrane passes span M17 to A37, I46 to F66, L93 to W113, M139 to F159, A172 to V192, and I222 to M242.

Its subcellular location is the cell membrane. This is an uncharacterized protein from Bacillus subtilis (strain 168).